The following is a 429-amino-acid chain: C4-dicarboxylate transport protein (429 aa).

8 helical membrane-spanning segments follow: residues 9–29, 45–65, 79–99, 149–169, 185–205, 223–243, 308–328, and 356–376; these read VLYV…HFYP, LIKM…IAGM, LLYF…ATHI, GEIL…AHLG, VLFG…FGAM, LIGT…GTIA, IYMT…LTWM, and AATL…ILGI.

This sequence belongs to the dicarboxylate/amino acid:cation symporter (DAACS) (TC 2.A.23) family.

It is found in the cell inner membrane. In terms of biological role, responsible for the transport of dicarboxylates such as succinate, fumarate, and malate from the periplasm across the membrane. The polypeptide is C4-dicarboxylate transport protein (Burkholderia ambifaria (strain ATCC BAA-244 / DSM 16087 / CCUG 44356 / LMG 19182 / AMMD) (Burkholderia cepacia (strain AMMD))).